The following is a 312-amino-acid chain: Pantothenate kinase (312 aa).

97–104 (GSVAVGKS) is a binding site for ATP.

This sequence belongs to the prokaryotic pantothenate kinase family.

The protein localises to the cytoplasm. It catalyses the reaction (R)-pantothenate + ATP = (R)-4'-phosphopantothenate + ADP + H(+). The protein operates within cofactor biosynthesis; coenzyme A biosynthesis; CoA from (R)-pantothenate: step 1/5. The sequence is that of Pantothenate kinase from Mycolicibacterium paratuberculosis (strain ATCC BAA-968 / K-10) (Mycobacterium paratuberculosis).